Reading from the N-terminus, the 240-residue chain is MKRPSGRAADQLRSIRITRNYTKHAEGSVLVEFGDTKVICTVSVENGVPRFLKGQGQGWLTAEYGMLPRATGERNQREASRGKQGGRTLEIQRLIGRSLRAALDMSKLGDLTLYVDCDVIQADGGTRTASITGAMVALVDALKVIKKRGGLKGGDPLKQMIGAVSVGMYQGEPVLDLDYLEDSAAETDLNVVMTSTGGFIEVQGTAEGAPFQPEELNAMLELAKKGMNEIFELQKAALAD.

Phosphate is bound by residues Arg87 and 125 to 127 (GTR).

This sequence belongs to the RNase PH family. Homohexameric ring arranged as a trimer of dimers.

It catalyses the reaction tRNA(n+1) + phosphate = tRNA(n) + a ribonucleoside 5'-diphosphate. In terms of biological role, phosphorolytic 3'-5' exoribonuclease that plays an important role in tRNA 3'-end maturation. Removes nucleotide residues following the 3'-CCA terminus of tRNAs; can also add nucleotides to the ends of RNA molecules by using nucleoside diphosphates as substrates, but this may not be physiologically important. Probably plays a role in initiation of 16S rRNA degradation (leading to ribosome degradation) during starvation. The protein is Ribonuclease PH of Pseudomonas fluorescens (strain Pf0-1).